The primary structure comprises 1256 residues: GPI inositol-deacylase (1256 aa).

The segment covering 37-48 (DVYANSTTNATA) has biased composition (polar residues). The disordered stretch occupies residues 37–203 (DVYANSTTNA…MEKEEEQKFV (167 aa)). N41 and N45 each carry an N-linked (GlcNAc...) asparagine glycan. Residues 59 to 68 (PRPSRPSQSS) are compositionally biased toward low complexity. Polar residues predominate over residues 69–83 (AAERTSPESPSVRQS). Residues 107-135 (QSPSQQSQNQQQQQQQQQQQQQQQQQQQS) are compositionally biased toward low complexity. Residues 143–156 (SGNFNWKLSHSRNG) are compositionally biased toward polar residues. A glycan (N-linked (GlcNAc...) asparagine) is linked at N155. The span at 165-180 (FFSSSFSHSPSTPPLS) shows a compositional bias: low complexity. Basic and acidic residues predominate over residues 190–202 (HSKEMEKEEEQKF). A helical membrane pass occupies residues 214–234 (AITFVTLLISILGIGFLALVL). N235 carries N-linked (GlcNAc...) asparagine glycosylation. The active site involves S397. N-linked (GlcNAc...) asparagine glycosylation is present at N582. A run of 2 helical transmembrane segments spans residues 882-902 (LYMR…TLVL) and 929-949 (SIPL…NSSS). An N-linked (GlcNAc...) asparagine glycan is attached at N960. 6 helical membrane passes run 980 to 1000 (PFFW…CTVF), 1005 to 1025 (LTLV…PGWI), 1053 to 1073 (ILLV…VCCL), 1103 to 1123 (SILL…VVWI), 1130 to 1150 (WLTP…IILV), and 1172 to 1192 (VLLF…AYML). N-linked (GlcNAc...) asparagine glycans are attached at residues N1212, N1239, and N1242.

The protein belongs to the GPI inositol-deacylase family.

Its subcellular location is the endoplasmic reticulum membrane. In terms of biological role, involved in inositol deacylation of GPI-anchored proteins which plays important roles in the quality control and ER-associated degradation of GPI-anchored proteins. The polypeptide is GPI inositol-deacylase (bst-1) (Neurospora crassa (strain ATCC 24698 / 74-OR23-1A / CBS 708.71 / DSM 1257 / FGSC 987)).